The primary structure comprises 152 residues: Large ribosomal subunit protein uL13 (152 aa).

It belongs to the universal ribosomal protein uL13 family. As to quaternary structure, part of the 50S ribosomal subunit.

In terms of biological role, this protein is one of the early assembly proteins of the 50S ribosomal subunit, although it is not seen to bind rRNA by itself. It is important during the early stages of 50S assembly. The protein is Large ribosomal subunit protein uL13 of Wolbachia pipientis wMel.